Here is a 185-residue protein sequence, read N- to C-terminus: Elongation factor P (185 aa).

This sequence belongs to the elongation factor P family.

It is found in the cytoplasm. Its pathway is protein biosynthesis; polypeptide chain elongation. Its function is as follows. Involved in peptide bond synthesis. Stimulates efficient translation and peptide-bond synthesis on native or reconstituted 70S ribosomes in vitro. Probably functions indirectly by altering the affinity of the ribosome for aminoacyl-tRNA, thus increasing their reactivity as acceptors for peptidyl transferase. The protein is Elongation factor P of Moorella thermoacetica (strain ATCC 39073 / JCM 9320).